Reading from the N-terminus, the 101-residue chain is Large ribosomal subunit protein uL24 (101 aa).

It belongs to the universal ribosomal protein uL24 family. As to quaternary structure, part of the 50S ribosomal subunit.

Functionally, one of two assembly initiator proteins, it binds directly to the 5'-end of the 23S rRNA, where it nucleates assembly of the 50S subunit. Its function is as follows. One of the proteins that surrounds the polypeptide exit tunnel on the outside of the subunit. This is Large ribosomal subunit protein uL24 from Streptococcus thermophilus (strain ATCC BAA-491 / LMD-9).